Here is a 795-residue protein sequence, read N- to C-terminus: Probable alpha,alpha-trehalose-phosphate synthase [UDP-forming] 4 (795 aa).

The interval 4-469 (PRLLVVSMSL…WADDFMKLTL (466 aa)) is glycosyltransferase.

This sequence in the N-terminal section; belongs to the glycosyltransferase 20 family. It in the C-terminal section; belongs to the trehalose phosphatase family.

The catalysed reaction is D-glucose 6-phosphate + UDP-alpha-D-glucose = alpha,alpha-trehalose 6-phosphate + UDP + H(+). The protein is Probable alpha,alpha-trehalose-phosphate synthase [UDP-forming] 4 (TPS4) of Arabidopsis thaliana (Mouse-ear cress).